Here is a 990-residue protein sequence, read N- to C-terminus: Aconitate hydratase 3, mitochondrial (990 aa).

The N-terminal 78 residues, 1–78, are a transit peptide targeting the mitochondrion; it reads MYLTASSSAS…PFRFTSQIRA (78 aa). A Phosphoserine modification is found at Ser-91. Substrate-binding positions include Gln-182 and 301–303; that span reads DSH. Positions 533, 599, and 602 each coordinate [4Fe-4S] cluster. Substrate-binding positions include Arg-632, Arg-637, Arg-795, and 876-877; that span reads SR.

The protein belongs to the aconitase/IPM isomerase family. Monomer. Interacts with B'GAMMA in the cytosol. [4Fe-4S] cluster is required as a cofactor. Post-translationally, phosphorylated at Ser-91 in the cytoplasm; this phosphorylation requires the presence of B'GAMMA. In terms of tissue distribution, major aconitase isoenzyme in young seedlings. Expressed in roots, leaves, stems and flowers, and, at low levels, in seeds.

It localises to the mitochondrion. It is found in the cytoplasm. It carries out the reaction citrate = D-threo-isocitrate. Its pathway is carbohydrate metabolism; tricarboxylic acid cycle; isocitrate from oxaloacetate: step 2/2. In terms of biological role, catalyzes the isomerization of citrate to isocitrate via cis-aconitate. Contributes to oxidative stress tolerance. Modulates cytosolic citrate metabolism during lipid mobilization. Required during seedling growth. This Arabidopsis thaliana (Mouse-ear cress) protein is Aconitate hydratase 3, mitochondrial.